A 550-amino-acid chain; its full sequence is Arginine--tRNA ligase (550 aa).

A 'HIGH' region motif is present at residues 130-140; it reads ANPTGPIHLGG.

Belongs to the class-I aminoacyl-tRNA synthetase family. In terms of assembly, monomer.

Its subcellular location is the cytoplasm. It catalyses the reaction tRNA(Arg) + L-arginine + ATP = L-arginyl-tRNA(Arg) + AMP + diphosphate. This chain is Arginine--tRNA ligase (argS), found in Corynebacterium glutamicum (strain ATCC 13032 / DSM 20300 / JCM 1318 / BCRC 11384 / CCUG 27702 / LMG 3730 / NBRC 12168 / NCIMB 10025 / NRRL B-2784 / 534).